A 584-amino-acid polypeptide reads, in one-letter code: MASVQASRRQWCYLCDLPKMPWAMVWDFSEAVCRGCVNFEGADRIELLIDAARQLKRSHVLPEGRSPGPPALKHPATKDLAAAAAQGPQLPPPQAQPQPSGTGGGVSGQDRYDRATSSGRLPLPSPALEYTLGSRLANGLGREEAVAEGARRALLGSMPGLMPPGLLAAAVSGLGSRGLTLAPGLSPARPLFGSDFEKEKQQRNADCLAELNEAMRGRAEEWHGRPKAVREQLLALSACAPFNVRFKKDHGLVGRVFAFDATARPPGYEFELKLFTEYPCGSGNVYAGVLAVARQMFHDALREPGKALASSGFKYLEYERRHGSGEWRQLGELLTDGVRSFREPAPAEALPQQYPEPAPAALCGPPPRAPSRNLAPTPRRRKASPEPEGEAAGKMTTEEQQQRHWVAPGGPYSAETPGVPSPIAALKNVAEALGHSPKDPGGGGGPVRAGGASPAASSTAQPPTQHRLVARNGEAEVSPTAGAEAVSGGGSGTGATPGAPLCCTLCRERLEDTHFVQCPSVPGHKFCFPCSREFIKAQGPAGEVYCPSGDKCPLVGSSVPWAFMQGEIATILAGDIKVKKERDP.

The interval 60–127 (VLPEGRSPGP…SGRLPLPSPA (68 aa)) is disordered. A phosphoserine mark is found at S66 and S125. R177 carries the omega-N-methylarginine modification. S186 bears the Phosphoserine mark. Residues 197 to 217 (EKEKQQRNADCLAELNEAMRG) adopt a coiled-coil conformation. K227 is covalently cross-linked (Glycyl lysine isopeptide (Lys-Gly) (interchain with G-Cter in SUMO2)). A disordered region spans residues 346–420 (PAEALPQQYP…PYSAETPGVP (75 aa)). Residues 354-369 (YPEPAPAALCGPPPRA) are compositionally biased toward pro residues. Residues S371, S384, S421, and S436 each carry the phosphoserine modification. Residues 433–495 (LGHSPKDPGG…VSGGGSGTGA (63 aa)) form a disordered region. K438 participates in a covalent cross-link: Glycyl lysine isopeptide (Lys-Gly) (interchain with G-Cter in SUMO2). A compositionally biased stretch (low complexity) spans 449 to 463 (AGGASPAASSTAQPP). Phosphoserine occurs at positions 453 and 457. The segment at 503 to 550 (CTLCRERLEDTHFVQCPSVPGHKFCFPCSREFIKAQGPAGEVYCPSGD) adopts an RING-type; degenerate zinc-finger fold. The interval 503–550 (CTLCRERLEDTHFVQCPSVPGHKFCFPCSREFIKAQGPAGEVYCPSGD) is cys-rich.

Belongs to the IRF2BP family. Interacts with IRF2. Part of a corepressor complex containing IRF2 and IRF2BP2. Interacts with JDP2.

The protein resides in the nucleus. The catalysed reaction is S-ubiquitinyl-[E2 ubiquitin-conjugating enzyme]-L-cysteine + [acceptor protein]-L-lysine = [E2 ubiquitin-conjugating enzyme]-L-cysteine + N(6)-ubiquitinyl-[acceptor protein]-L-lysine.. Functionally, acts as a transcriptional corepressor in a IRF2-dependent manner; this repression is not mediated by histone deacetylase activities. May act as an E3 ligase towards JDP2, enhancing its polyubiquitination. Represses ATF2-dependent transcriptional activation. The protein is Interferon regulatory factor 2-binding protein 1 (IRF2BP1) of Homo sapiens (Human).